A 33-amino-acid chain; its full sequence is Protamine-1A (33 aa).

The disordered stretch occupies residues 1 to 33 (PRRRRSSSRPVRRRRRPRRVSRRRRRRGGRRRR).

Testis.

It is found in the nucleus. It localises to the chromosome. Protamines substitute for histones in the chromatin of sperm during the haploid phase of spermatogenesis. They compact sperm DNA into a highly condensed, stable and inactive complex. The sequence is that of Protamine-1A from Oncorhynchus mykiss (Rainbow trout).